The chain runs to 239 residues: tRNA (guanine-N(1)-)-methyltransferase (239 aa).

Residues glycine 108 and 128–133 (VGNFIV) contribute to the S-adenosyl-L-methionine site.

The protein belongs to the RNA methyltransferase TrmD family. As to quaternary structure, homodimer.

The protein resides in the cytoplasm. The enzyme catalyses guanosine(37) in tRNA + S-adenosyl-L-methionine = N(1)-methylguanosine(37) in tRNA + S-adenosyl-L-homocysteine + H(+). In terms of biological role, specifically methylates guanosine-37 in various tRNAs. The chain is tRNA (guanine-N(1)-)-methyltransferase from Helicobacter hepaticus (strain ATCC 51449 / 3B1).